The chain runs to 200 residues: Large ribosomal subunit protein bL25 (200 aa).

The protein belongs to the bacterial ribosomal protein bL25 family. CTC subfamily. In terms of assembly, part of the 50S ribosomal subunit; part of the 5S rRNA/L5/L18/L25 subcomplex. Contacts the 5S rRNA. Binds to the 5S rRNA independently of L5 and L18.

This is one of the proteins that binds to the 5S RNA in the ribosome where it forms part of the central protuberance. This is Large ribosomal subunit protein bL25 from Caldicellulosiruptor bescii (strain ATCC BAA-1888 / DSM 6725 / KCTC 15123 / Z-1320) (Anaerocellum thermophilum).